Reading from the N-terminus, the 137-residue chain is Putative pre-16S rRNA nuclease (137 aa).

The protein belongs to the YqgF nuclease family.

The protein localises to the cytoplasm. Could be a nuclease involved in processing of the 5'-end of pre-16S rRNA. In Actinobacillus pleuropneumoniae serotype 5b (strain L20), this protein is Putative pre-16S rRNA nuclease.